A 71-amino-acid chain; its full sequence is Large ribosomal subunit protein bL31 (71 aa).

Residues Cys-16, Cys-18, Cys-38, and Cys-41 each coordinate Zn(2+).

This sequence belongs to the bacterial ribosomal protein bL31 family. Type A subfamily. Part of the 50S ribosomal subunit. Zn(2+) is required as a cofactor.

Its function is as follows. Binds the 23S rRNA. In Laribacter hongkongensis (strain HLHK9), this protein is Large ribosomal subunit protein bL31.